The following is a 503-amino-acid chain: MKKFKNISITFLILISLGVLNSCESVLEVEPESSISDEQFWKTNEDAKLGLAAAYDALQKAYRTKRFYWGEFRADNYVNSEKPQPDTQDLINNNLTPESSTEYLQWDEFYSLIFRANLAIEKIPEIPYYDTQYLGEAYALRAFAYFDAYRVWGGVPLFTKAELTFSDDAIKPRSSAQEVLDLVLSDIEEAEKNLTVVSSDYTFSKLSLLAFKAQVHMYLNEYEAANTALTSLIASNQFSLTTNRKQWRDLFLNDEINYPGEGQEGPELIMSIRYDFEEDGNRASGIYQVFFPGVPSYYVAPNLVEEWETKFPTDSTAWATKYPNVPPHVFEENEDTGELNAKYGDYRYYESIAAPGTQEEDLRISKYHKVNISPSIDDTNIILFRYADMLLLKAEALNQLGQPTEAIELVNQIREARELPLVNSGTIPDVVNINDKDELEDFILSERRLELLAEGYRWWDLVRTNKAVEVMGPINGLTQDRIIWPLWFRHLIDNPKLEQNVPY.

The N-terminal stretch at 1-21 (MKKFKNISITFLILISLGVLN) is a signal peptide.

It belongs to the SusD family.

It is found in the cell outer membrane. Its function is as follows. Polysaccharide-binding protein probably involved in ulvan degradation. Ulvan is the main polysaccharide component of the Ulvales (green seaweed) cell wall. It is composed of disaccharide building blocks comprising 3-sulfated rhamnose (Rha3S) linked to D-glucuronic acid (GlcA), L-iduronic acid (IduA), or D-xylose (Xyl). The SusD-like protein may mediate ulvan oligomer-binding before transport in the periplasm for further degradation. This chain is SusD-like protein P38, found in Formosa agariphila (strain DSM 15362 / KCTC 12365 / LMG 23005 / KMM 3901 / M-2Alg 35-1).